We begin with the raw amino-acid sequence, 290 residues long: MNFIIATRRSKLAQVQTEIIIDLLNKKHDIECEKLLIETVGDKILEVSLDKIGGKGLFVKDIEVAMLEQRADAAVHSMKDVPYEMPKGFEIIAIPEREDVRDAFISLDNIKFKDLREGAKIGTSSRRRAAQLKLLRPDLDIVPIRGNVQTRIEKIKKENLDGIILAVAGLKRVNLDHLITDYFDTKEMVPAIGQGALGIEVMEEHPKKELFKDLDHYNSKICVLAERAFMRELDGDCHSTIGAYASIKDNIMHIIGIFERKNKIVKKEITGTKDQYEKLGIALAEHILKD.

Cys-237 carries the S-(dipyrrolylmethanemethyl)cysteine modification.

It belongs to the HMBS family. As to quaternary structure, monomer. Dipyrromethane is required as a cofactor.

The enzyme catalyses 4 porphobilinogen + H2O = hydroxymethylbilane + 4 NH4(+). The protein operates within porphyrin-containing compound metabolism; protoporphyrin-IX biosynthesis; coproporphyrinogen-III from 5-aminolevulinate: step 2/4. In terms of biological role, tetrapolymerization of the monopyrrole PBG into the hydroxymethylbilane pre-uroporphyrinogen in several discrete steps. This Clostridium botulinum (strain Loch Maree / Type A3) protein is Porphobilinogen deaminase.